The following is a 214-amino-acid chain: Epoxide hydrolase EphH (214 aa).

Serine 28 (nucleophile) is an active-site residue. Catalysis depends on charge relay system residues aspartate 156 and histidine 186.

Belongs to the AB hydrolase superfamily.

It catalyses the reaction an epoxide + H2O = an ethanediol. With respect to regulation, inhibited by AUDA, a known epoxide hydrolase inhibitor. Functionally, catalyzes the hydrolysis of epoxide-containing substrates. In vitro, catalyzes the hydrolysis of the synthetic compounds PHOME and styrene oxide. Plays an essential role in subverting phagosomal acidification. Plays a major role in the survival of M.tuberculosis (Mtb) during in vitro acidic stress and protects Mtb in response to phagosomal acidification inside macrophages. Also supports Mtb growth under the nutrient-deprived condition at pH 7.0. The sequence is that of Epoxide hydrolase EphH from Mycobacterium tuberculosis (strain ATCC 25618 / H37Rv).